We begin with the raw amino-acid sequence, 81 residues long: MSNLLAIGIAALIVALIITIVVWTIAYIEYKKLVRQRKINRLYKRISERAEDSGNESEGDAEELAALGEVGPFIPGDINNL.

Residues 1–7 (MSNLLAI) lie on the Extracellular side of the membrane. A helical membrane pass occupies residues 8-28 (GIAALIVALIITIVVWTIAYI). Topologically, residues 29 to 81 (EYKKLVRQRKINRLYKRISERAEDSGNESEGDAEELAALGEVGPFIPGDINNL) are cytoplasmic. 2 positions are modified to phosphoserine; by host CK2: serine 53 and serine 57.

Belongs to the HIV-1 VPU protein family. As to quaternary structure, homopentamer. Interacts with host CD4 and BRTC; these interactions induce proteasomal degradation of CD4. Interacts with host BST2; this interaction leads to the degradation of host BST2. Interacts with host FBXW11. Interacts with host AP1M1; this interaction plays a role in the mistrafficking and subsequent degradation of host BST2. Interacts with host RANBP2; this interaction allows Vpu to down-regulate host BLM sumoylation. In terms of processing, phosphorylated by host CK2. This phosphorylation is necessary for interaction with human BTRC and degradation of CD4.

It is found in the host membrane. Ion channel activity is inhibited by hexamethylene amiloride in vitro. Functionally, enhances virion budding by targeting host CD4 and Tetherin/BST2 to proteasome degradation. Degradation of CD4 prevents any unwanted premature interactions between viral Env and its host receptor CD4 in the endoplasmic reticulum. Degradation of antiretroviral protein Tetherin/BST2 is important for virion budding, as BST2 tethers new viral particles to the host cell membrane. Mechanistically, Vpu bridges either CD4 or BST2 to BTRC, a substrate recognition subunit of the Skp1/Cullin/F-box protein E3 ubiquitin ligase, induces their ubiquitination and subsequent proteasomal degradation. The alteration of the E3 ligase specificity by Vpu seems to promote the degradation of host IKBKB, leading to NF-kappa-B down-regulation and subsequent apoptosis. Acts as a viroporin that forms an oligomeric ion channel in membranes. Modulates the host DNA repair mechanisms to promote degradation of nuclear viral cDNA in cells that are already productively infected in order to suppress immune sensing and proviral hyper-integration (superinfection). Manipulates PML-NBs and modulates SUMOylation of host BLM protein thereby enhancing its DNA-end processing activity toward viral unintegrated linear DNA. Also inhibits RAD52-mediated homologous repair of viral cDNA, preventing the generation of dead-end circular forms of single copies of the long terminal repeat and permitting sustained nucleolytic attack. This Homo sapiens (Human) protein is Protein Vpu.